The chain runs to 117 residues: Large ribosomal subunit protein uL18 (117 aa).

Belongs to the universal ribosomal protein uL18 family. Part of the 50S ribosomal subunit; part of the 5S rRNA/L5/L18/L25 subcomplex. Contacts the 5S and 23S rRNAs.

This is one of the proteins that bind and probably mediate the attachment of the 5S RNA into the large ribosomal subunit, where it forms part of the central protuberance. This Serratia proteamaculans (strain 568) protein is Large ribosomal subunit protein uL18.